The primary structure comprises 543 residues: Chaperonin GroEL 2 (543 aa).

ATP-binding positions include 29-32 (TLGP), 86-90 (DGTTT), Gly413, and Asp495. The tract at residues 524 to 543 (KPEPKENAPTGAGMGGDFDY) is disordered.

It belongs to the chaperonin (HSP60) family. Forms a cylinder of 14 subunits composed of two heptameric rings stacked back-to-back. Interacts with the co-chaperonin GroES.

The protein resides in the cytoplasm. The enzyme catalyses ATP + H2O + a folded polypeptide = ADP + phosphate + an unfolded polypeptide.. Functionally, together with its co-chaperonin GroES, plays an essential role in assisting protein folding. The GroEL-GroES system forms a nano-cage that allows encapsulation of the non-native substrate proteins and provides a physical environment optimized to promote and accelerate protein folding. This Acaryochloris marina (strain MBIC 11017) protein is Chaperonin GroEL 2.